Here is a 2203-residue protein sequence, read N- to C-terminus: Voltage-dependent L-type calcium channel subunit alpha-1D (2203 aa).

2 disordered regions span residues 1–51 (MMMM…QTVL) and 64–100 (KAAQ…SSNS). Residues 1 to 126 (MMMMMMMKKM…RACISIVDWK (126 aa)) lie on the Cytoplasmic side of the membrane. Positions 38-51 (GPTSQPNSSKQTVL) are enriched in polar residues. Over residues 82 to 93 (QRKRQQYAKSKK) the composition is skewed to basic residues. Residues 112-408 (NNPIRRACIS…NLVLGVLSGE (297 aa)) form an I repeat. A helical membrane pass occupies residues 127–145 (PFDIFILLAIFANCVALAI). Over 146–163 (YIPFPEDDSNSTNHNLEK) the chain is Extracellular. Residue asparagine 155 is glycosylated (N-linked (GlcNAc...) asparagine). A helical membrane pass occupies residues 164–183 (VEYAFLIIFTVETFLKIIAS). The Cytoplasmic segment spans residues 184–195 (GLLLHPNASVRN). The helical transmembrane segment at 196-214 (GWNLLDFVIVIVGLFSVIL) threads the bilayer. Residues 215 to 235 (EQLTKETEGGNHSSGKSGGFD) are Extracellular-facing. The N-linked (GlcNAc...) asparagine glycan is linked to asparagine 225. The chain crosses the membrane as a helical span at residues 236-254 (VKALRAFRVLRPLRLVSGV). At 255–273 (PSLQVVLNSIIKAMVPLLH) the chain is on the cytoplasmic side. Residues 274–293 (IALLVLFVIIIYAIIGLELF) form a helical membrane-spanning segment. The Extracellular segment spans residues 294 to 381 (IGKMHKTCFF…WVNDAIGWEW (88 aa)). An N-linked (GlcNAc...) asparagine glycan is attached at asparagine 329. Glutamate 364 is a Ca(2+) binding site. Residues 382–406 (PWVYFVSLIILGSFFVLNLVLGVLS) traverse the membrane as a helical segment. Over 407 to 582 (GEFSKEREKA…RRCRAAVKSV (176 aa)) the chain is Cytoplasmic. The binding to the beta subunit stretch occupies residues 429–446 (QQLEEDLKGYLDWITQAE). The segment at 449 to 480 (DPENEEEGGEEGKRNTSMPTSETESVNTENVS) is disordered. Over residues 463–479 (NTSMPTSETESVNTENV) the composition is skewed to polar residues. One copy of the II repeat lies at 528–774 (EALCVCRCSL…DWNAVMYDGI (247 aa)). The chain crosses the membrane as a helical span at residues 583–602 (TFYWLVIVLVFLNTLTISSE). At 603-617 (HYNQPDWLTQIQDIA) the chain is on the extracellular side. A helical membrane pass occupies residues 618–636 (NKVLLALFTCEMLVKMYSL). At 637 to 644 (GLQAYFVS) the chain is on the cytoplasmic side. The chain crosses the membrane as a helical span at residues 645–663 (LFNRFDCFVVCGGITETIL). Topologically, residues 664–673 (VELELMSPLG) are extracellular. Residues 674–692 (VSVFRCVRLLRIFKVTRHW) traverse the membrane as a helical segment. Residues 693 to 711 (TSLSNLVASLLNSMKSIAS) are Cytoplasmic-facing. A helical transmembrane segment spans residues 712-732 (LLLLLFLFIIIFSLLGMQLFG). The Extracellular portion of the chain corresponds to 733–786 (GKFNFDETQTKRSTFDNFPQALLTVFQILTGEDWNAVMYDGIMAYGGPSSSGMI). Ca(2+) is bound at residue glutamate 764. The chain crosses the membrane as a helical span at residues 787-811 (VCIYFIILFICGNYILLKLFLAIAV). At 812–945 (DNLADAESLN…VGCHKLINHH (134 aa)) the chain is on the cytoplasmic side. The disordered stretch occupies residues 822-909 (TAQKEEAEEK…AGPRPRRISE (88 aa)). The segment covering 824 to 849 (QKEEAEEKERKKIARKESLENKKNNK) has biased composition (basic and acidic residues). The span at 850 to 861 (PEVNQIANSDNK) shows a compositional bias: polar residues. Residues 884–897 (VGEEEEEEEEDEPE) are compositionally biased toward acidic residues. The III repeat unit spans residues 892 to 1174 (EEDEPEVPAG…LLYKAIDSNG (283 aa)). Residues 946–964 (IFTNLILVFIMLSSAALAA) traverse the membrane as a helical segment. The Extracellular segment spans residues 965-980 (EDPIRSHSFRNTILGY). The chain crosses the membrane as a helical span at residues 981–1000 (FDYAFTAIFTVEILLKMTTF). At 1001 to 1012 (GAFLHKGAFCRN) the chain is on the cytoplasmic side. The chain crosses the membrane as a helical span at residues 1013–1031 (YFNLLDMLVVGVSLVSFGI). Residues 1032–1037 (QSSAIS) are Extracellular-facing. A helical transmembrane segment spans residues 1038 to 1057 (VVKILRVLRVLRPLRAINRA). Residues 1058–1076 (KGLKHVVQCVFVAIRTIGN) are Cytoplasmic-facing. Residues 1077–1096 (IMIVTTLLQFMFACIGVQLF) traverse the membrane as a helical segment. Topologically, residues 1097 to 1186 (KGKFYRCTDE…VGPVYNYRVE (90 aa)) are extracellular. The interval 1134 to 1224 (RIWQNSDFNF…QEQGEKEYKN (91 aa)) is dihydropyridine binding. Ca(2+) is bound at residue glutamate 1160. The helical transmembrane segment at 1187-1207 (ISIFFIIYIIIVAFFMMNIFV) threads the bilayer. The Cytoplasmic portion of the chain corresponds to 1208–1264 (GFVIVTFQEQGEKEYKNCELDKNQRQCVEYALKARPLRRYIPKNPYQYKFWYVVNSS). The stretch at 1211–1486 (IVTFQEQGEK…YTCGSNFAIV (276 aa)) is one IV repeat. A helical membrane pass occupies residues 1265–1283 (PFEYMMFVLIMLNTLCLAM). The Extracellular segment spans residues 1284-1298 (QHYEQSKMFNDAMDI). The chain crosses the membrane as a helical span at residues 1299–1318 (LNMVFTGVFTVEMVLKVIAF). Residues 1319 to 1325 (KPKGYFS) lie on the Cytoplasmic side of the membrane. Residues 1326–1347 (DAWNTFDSLIVIGSIIDVALSE) form a helical membrane-spanning segment. Over 1348 to 1357 (ADNSEESNRI) the chain is Extracellular. Residues 1358 to 1377 (SITFFRLFRVMRLVKLLSRG) form a helical membrane-spanning segment. At 1378-1396 (EGIRTLLWTFIKSFQALPY) the chain is on the cytoplasmic side. The chain crosses the membrane as a helical span at residues 1397–1416 (VALLIAMLFFIYAVIGMQMF). At 1417 to 1483 (GKVAMRDNNQ…GEEYTCGSNF (67 aa)) the chain is on the extracellular side. The tract at residues 1464 to 1530 (LCDPDSDYNP…LGPHHLDEFK (67 aa)) is dihydropyridine binding. Residues 1476-1519 (EYTCGSNFAIVYFISFYMLCAFLIINLFVAVIMDNFDYLTRDWS) are phenylalkylamine binding. The helical transmembrane segment at 1484–1508 (AIVYFISFYMLCAFLIINLFVAVIM) threads the bilayer. At 1509-2203 (DNFDYLTRDW…ADEMICITTL (695 aa)) the chain is on the cytoplasmic side. Disordered stretches follow at residues 1734 to 1766 (NHVN…PASD), 1795 to 1816 (TSTN…KRPS), 1920 to 1963 (FERP…HRRS), and 2176 to 2195 (GPGY…DLAD). Residues 1795–1806 (TSTNANLNNANM) show a composition bias toward polar residues. Acidic residues predominate over residues 2180–2195 (SDEEPDPGREEEDLAD).

The protein belongs to the calcium channel alpha-1 subunit (TC 1.A.1.11) family. CACNA1D subfamily. In terms of assembly, voltage-dependent calcium channels are multisubunit complexes, consisting of alpha-1, alpha-2, beta and delta subunits in a 1:1:1:1 ratio. The channel activity is directed by the pore-forming and voltage-sensitive alpha-1 subunit. In many cases, this subunit is sufficient to generate voltage-sensitive calcium channel activity. The auxiliary subunits beta and alpha-2/delta linked by a disulfide bridge regulate the channel activity. Interacts with CABP1 and CABP4, resulting in a near elimination of calcium-dependent inactivation of the channel. Interacts with RIMBP2. Expressed in brain, pancreatic islets and B-lymphocytes.

It localises to the membrane. It carries out the reaction Ca(2+)(in) = Ca(2+)(out). Its function is as follows. Voltage-sensitive calcium channels (VSCC) mediate the entry of calcium ions into excitable cells and are also involved in a variety of calcium-dependent processes, including muscle contraction, hormone or neurotransmitter release, gene expression, cell motility, cell division and cell death. The isoform alpha-1D gives rise to L-type calcium currents. Long-lasting (L-type) calcium channels belong to the 'high-voltage activated' (HVA) group. They are blocked by dihydropyridines (DHP), phenylalkylamines, and by benzothiazepines. Functionally, voltage-sensitive calcium channels (VSCC) mediate the entry of calcium ions into excitable cells and are also involved in a variety of calcium-dependent processes, including muscle contraction, hormone or neurotransmitter release, gene expression, cell motility, cell division and cell death. The isoform alpha-1D gives rise to L-type calcium currents. The sequence is that of Voltage-dependent L-type calcium channel subunit alpha-1D (Cacna1d) from Rattus norvegicus (Rat).